A 354-amino-acid chain; its full sequence is F-box/kelch-repeat protein At1g80440 (354 aa).

The F-box domain maps to E2 to A49. Kelch repeat units follow at residues R63–V110, D115–S163, T166–G213, and F215–C263.

This chain is F-box/kelch-repeat protein At1g80440, found in Arabidopsis thaliana (Mouse-ear cress).